The primary structure comprises 61 residues: Putative antitoxin RelB2 (61 aa).

Its function is as follows. Antitoxin component of a type II toxin-antitoxin (TA) system. Its cognate toxin is RelE2 (Potential). The protein is Putative antitoxin RelB2 (relB2) of Methanocaldococcus jannaschii (strain ATCC 43067 / DSM 2661 / JAL-1 / JCM 10045 / NBRC 100440) (Methanococcus jannaschii).